Consider the following 498-residue polypeptide: Heat stress transcription factor A-3 (498 aa).

The interval 156 to 180 (RRRSSPTQQSGLQPGSSGESGLDPE) is disordered. Positions 160 to 174 (SPTQQSGLQPGSSGE) are enriched in polar residues. A coiled-coil region spans residues 180–235 (ELNTLRREKSALLQEVTRLKQEHLQTIEQMSTLNQRLESAEDRQKQMVSFLAKLLQ). Positions 184-234 (LRREKSALLQEVTRLKQEHLQTIEQMSTLNQRLESAEDRQKQMVSFLAKLL) are hydrophobic repeat HR-A/B. A Nuclear localization signal motif is present at residues 258-263 (KRKFLK). The tract at residues 263 to 291 (KHVPHGNIDSGESSSQHTGESNLDFSPTS) is disordered. Polar residues predominate over residues 272 to 291 (SGESSSQHTGESNLDFSPTS). The short motif at 309–316 (LEDGDLNL) is the Nuclear export signal element. The tract at residues 356–382 (LEIPPASGPRGQDPTIGRSKGKNVLSP) is disordered.

The protein belongs to the HSF family. Class A subfamily. Homotrimer. Post-translationally, exhibits temperature-dependent phosphorylation.

Its subcellular location is the cytoplasm. It is found in the nucleus. Transcriptional regulator that specifically binds DNA of heat shock promoter elements (HSE). The polypeptide is Heat stress transcription factor A-3 (HSFA3) (Oryza sativa subsp. japonica (Rice)).